Consider the following 240-residue polypeptide: Small ribosomal subunit protein uS3 (240 aa).

Positions 39–108 (LRKFLKKKLY…ELILNIKEER (70 aa)) constitute a KH type-2 domain. Residues 213–224 (MNSDDTATPERK) show a composition bias toward basic and acidic residues. A disordered region spans residues 213 to 240 (MNSDDTATPERKAPRRRKGRRNVNAKKN). Residues 225–240 (APRRRKGRRNVNAKKN) are compositionally biased toward basic residues.

Belongs to the universal ribosomal protein uS3 family. In terms of assembly, part of the 30S ribosomal subunit. Forms a tight complex with proteins S10 and S14.

Functionally, binds the lower part of the 30S subunit head. Binds mRNA in the 70S ribosome, positioning it for translation. The sequence is that of Small ribosomal subunit protein uS3 from Nautilia profundicola (strain ATCC BAA-1463 / DSM 18972 / AmH).